The primary structure comprises 511 residues: Glucans biosynthesis protein G (511 aa).

Positions 1-22 are cleaved as a signal peptide; it reads MMKMRWLSAAVMLTLYTSSSWA.

The protein belongs to the OpgD/OpgG family.

The protein resides in the periplasm. Its pathway is glycan metabolism; osmoregulated periplasmic glucan (OPG) biosynthesis. Functionally, involved in the biosynthesis of osmoregulated periplasmic glucans (OPGs). In Escherichia fergusonii (strain ATCC 35469 / DSM 13698 / CCUG 18766 / IAM 14443 / JCM 21226 / LMG 7866 / NBRC 102419 / NCTC 12128 / CDC 0568-73), this protein is Glucans biosynthesis protein G.